A 377-amino-acid polypeptide reads, in one-letter code: ATP-dependent (S)-NAD(P)H-hydrate dehydratase (377 aa).

Residues 10–366 (LLHLSRQLIQ…EYLHESFTEL (357 aa)) form the YjeF C-terminal domain. (6S)-NADPHX-binding positions include glycine 148 and 201–207 (NVVEFQR). ATP-binding positions include 245–249 (KGEHD) and 264–273 (GSNKRVGGQG). Aspartate 274 lines the (6S)-NADPHX pocket.

The protein belongs to the NnrD/CARKD family. It depends on Mg(2+) as a cofactor.

The protein resides in the cytoplasm. It catalyses the reaction (6S)-NADHX + ATP = ADP + phosphate + NADH + H(+). The catalysed reaction is (6S)-NADPHX + ATP = ADP + phosphate + NADPH + H(+). In terms of biological role, catalyzes the dehydration of the S-form of NAD(P)HX at the expense of ATP, which is converted to ADP. Together with NAD(P)HX epimerase, which catalyzes the epimerization of the S- and R-forms, the enzyme allows the repair of both epimers of NAD(P)HX, a damaged form of NAD(P)H that is a result of enzymatic or heat-dependent hydration. In Candida albicans (strain SC5314 / ATCC MYA-2876) (Yeast), this protein is ATP-dependent (S)-NAD(P)H-hydrate dehydratase.